The primary structure comprises 302 residues: Sulfate adenylyltransferase subunit 2 (302 aa).

The protein belongs to the PAPS reductase family. CysD subfamily. As to quaternary structure, heterodimer composed of CysD, the smaller subunit, and CysN.

The catalysed reaction is sulfate + ATP + H(+) = adenosine 5'-phosphosulfate + diphosphate. The protein operates within sulfur metabolism; hydrogen sulfide biosynthesis; sulfite from sulfate: step 1/3. Its function is as follows. With CysN forms the ATP sulfurylase (ATPS) that catalyzes the adenylation of sulfate producing adenosine 5'-phosphosulfate (APS) and diphosphate, the first enzymatic step in sulfur assimilation pathway. APS synthesis involves the formation of a high-energy phosphoric-sulfuric acid anhydride bond driven by GTP hydrolysis by CysN coupled to ATP hydrolysis by CysD. The sequence is that of Sulfate adenylyltransferase subunit 2 from Aeromonas hydrophila subsp. hydrophila (strain ATCC 7966 / DSM 30187 / BCRC 13018 / CCUG 14551 / JCM 1027 / KCTC 2358 / NCIMB 9240 / NCTC 8049).